The sequence spans 200 residues: Dephospho-CoA kinase (200 aa).

In terms of domain architecture, DPCK spans 4-200 (VIGLTGGIAS…AILKKWNIID (197 aa)). ATP is bound at residue 12–17 (ASGKST).

This sequence belongs to the CoaE family.

It localises to the cytoplasm. It carries out the reaction 3'-dephospho-CoA + ATP = ADP + CoA + H(+). It functions in the pathway cofactor biosynthesis; coenzyme A biosynthesis; CoA from (R)-pantothenate: step 5/5. In terms of biological role, catalyzes the phosphorylation of the 3'-hydroxyl group of dephosphocoenzyme A to form coenzyme A. The polypeptide is Dephospho-CoA kinase (Bacillus thuringiensis subsp. konkukian (strain 97-27)).